Consider the following 162-residue polypeptide: Endoribonuclease YbeY (162 aa).

The Zn(2+) site is built by H128, H132, and H138.

This sequence belongs to the endoribonuclease YbeY family. Zn(2+) serves as cofactor.

It is found in the cytoplasm. In terms of biological role, single strand-specific metallo-endoribonuclease involved in late-stage 70S ribosome quality control and in maturation of the 3' terminus of the 16S rRNA. The chain is Endoribonuclease YbeY from Lactococcus lactis subsp. lactis (strain IL1403) (Streptococcus lactis).